The primary structure comprises 160 residues: MPDRRGDRGRHQARKRAVDLLFEAEARGLTAEAVADSRAALAEDQDDVAPLNPYTVLVARGVTEHAAHIDDLISAHLQGWTLERLPAVDRAILRVAVWELLHAEDVPEPVAVDEAVELAKELSTDESPGFVNGVLGQVMLVTPQIRAASQAVRGTGPAEG.

This sequence belongs to the NusB family.

Its function is as follows. Involved in transcription antitermination. Required for transcription of ribosomal RNA (rRNA) genes. Binds specifically to the boxA antiterminator sequence of the ribosomal RNA (rrn) operons. The protein is Transcription antitermination protein NusB of Mycolicibacterium smegmatis (strain ATCC 700084 / mc(2)155) (Mycobacterium smegmatis).